The following is a 338-amino-acid chain: Glycerol-3-phosphate dehydrogenase [NAD(P)+] (338 aa).

The NADPH site is built by S14, Y15, H35, and K109. 3 residues coordinate sn-glycerol 3-phosphate: K109, G138, and T140. A142 is a binding site for NADPH. The sn-glycerol 3-phosphate site is built by K194, D247, S257, R258, and N259. The active-site Proton acceptor is the K194. R258 lines the NADPH pocket. NADPH-binding residues include V282 and E284.

This sequence belongs to the NAD-dependent glycerol-3-phosphate dehydrogenase family.

The protein resides in the cytoplasm. The catalysed reaction is sn-glycerol 3-phosphate + NAD(+) = dihydroxyacetone phosphate + NADH + H(+). The enzyme catalyses sn-glycerol 3-phosphate + NADP(+) = dihydroxyacetone phosphate + NADPH + H(+). The protein operates within membrane lipid metabolism; glycerophospholipid metabolism. Its function is as follows. Catalyzes the reduction of the glycolytic intermediate dihydroxyacetone phosphate (DHAP) to sn-glycerol 3-phosphate (G3P), the key precursor for phospholipid synthesis. The sequence is that of Glycerol-3-phosphate dehydrogenase [NAD(P)+] from Shewanella frigidimarina (strain NCIMB 400).